A 421-amino-acid chain; its full sequence is uncharacterized protein (421 aa).

This is an uncharacterized protein from Acanthamoeba polyphaga (Amoeba).